Consider the following 471-residue polypeptide: Lincomycin resistance protein LmrB (471 aa).

12 helical membrane passes run 13-35 (PIPI…TALN), 55-77 (LTTG…LQWF), 84-106 (FTAV…FAML), 111-133 (VVQA…LIFP), 140-162 (AMGM…SGLI), 167-189 (TWNW…GMKF), 201-223 (IDIL…FSSA), 227-249 (GWGS…LFVW), 269-291 (FTLG…ILLP), 329-351 (AYGP…FFLT), 358-380 (SALT…MMPA), and 445-467 (GIQN…SLFI).

The protein belongs to the major facilitator superfamily. EmrB family.

It is found in the cell membrane. Its function is as follows. Proton-dependent transporter. May mediate the efflux of lincomycin. This Listeria monocytogenes serovar 1/2a (strain ATCC BAA-679 / EGD-e) protein is Lincomycin resistance protein LmrB (lmrB).